The following is a 183-amino-acid chain: ATP synthase subunit b, chloroplastic (183 aa).

The chain crosses the membrane as a helical span at residues 27 to 49 (LATNLINLTVVVGVLIFFGKGVL).

This sequence belongs to the ATPase B chain family. As to quaternary structure, F-type ATPases have 2 components, F(1) - the catalytic core - and F(0) - the membrane proton channel. F(1) has five subunits: alpha(3), beta(3), gamma(1), delta(1), epsilon(1). F(0) has four main subunits: a(1), b(1), b'(1) and c(10-14). The alpha and beta chains form an alternating ring which encloses part of the gamma chain. F(1) is attached to F(0) by a central stalk formed by the gamma and epsilon chains, while a peripheral stalk is formed by the delta, b and b' chains.

The protein resides in the plastid. The protein localises to the chloroplast thylakoid membrane. In terms of biological role, f(1)F(0) ATP synthase produces ATP from ADP in the presence of a proton or sodium gradient. F-type ATPases consist of two structural domains, F(1) containing the extramembraneous catalytic core and F(0) containing the membrane proton channel, linked together by a central stalk and a peripheral stalk. During catalysis, ATP synthesis in the catalytic domain of F(1) is coupled via a rotary mechanism of the central stalk subunits to proton translocation. Functionally, component of the F(0) channel, it forms part of the peripheral stalk, linking F(1) to F(0). This is ATP synthase subunit b, chloroplastic from Lolium perenne (Perennial ryegrass).